Here is a 48-residue protein sequence, read N- to C-terminus: MAERKGSISGLTDDEAQEFHKFWVQGFVGFTAVAVVAHFLVWVWRPWL.

The Cytoplasmic portion of the chain corresponds to 2–21; that stretch reads AERKGSISGLTDDEAQEFHK. A bacteriochlorophyll is bound by residues His20 and His38. Residues 22-44 form a helical membrane-spanning segment; the sequence is FWVQGFVGFTAVAVVAHFLVWVW. The Periplasmic portion of the chain corresponds to 45 to 48; that stretch reads RPWL.

An alpha/beta heterodimer. The core complex is formed by different alpha and beta chains, binding bacteriochlorophyll molecules, and arranged most probably in tetrameric structures disposed around the reaction center. The non-pigmented gamma chains may constitute additional components.

Its subcellular location is the cell inner membrane. Antenna complexes are light-harvesting systems, which transfer the excitation energy to the reaction centers. The polypeptide is Light-harvesting protein B-870 beta chain (pufB) (Rubrivivax gelatinosus (Rhodocyclus gelatinosus)).